Consider the following 132-residue polypeptide: Dormancy-associated protein 1 (132 aa).

The segment at 53 to 76 (MPAAVSPGTPTTPTTPTTPRKDNV) is disordered. The segment covering 61-70 (TPTTPTTPTT) has biased composition (low complexity). Threonine 64 carries the phosphothreonine modification.

This sequence belongs to the DRM1/ARP family. As to expression, isoform 1: Expressed mainly in the low bolt. Isoform 2: Expressed mainly in the low bolt. Detected in flowers. Isoform 4: Expressed mainly in the low bolt. Isoform 5: Expressed mainly in the 6 days old seedlings. Detected in 16 days old seedlings, axil, low bolt and floral samples, but only barely in leaves and top bolt.

This chain is Dormancy-associated protein 1, found in Arabidopsis thaliana (Mouse-ear cress).